A 236-amino-acid polypeptide reads, in one-letter code: Sugar fermentation stimulation protein homolog (236 aa).

It belongs to the SfsA family.

This Proteus mirabilis (strain HI4320) protein is Sugar fermentation stimulation protein homolog.